A 111-amino-acid polypeptide reads, in one-letter code: Probable 4-amino-4-deoxy-L-arabinose-phosphoundecaprenol flippase subunit ArnE (111 aa).

The Cytoplasmic portion of the chain corresponds to 1–35 (MIWLTLVFASLLSVAGQLCQKQATCFAAVNKRRKH). A helical membrane pass occupies residues 36-56 (IVLWLGLALACLGLAMVLWLL). The region spanning 40–109 (LGLALACLGL…IIGGIVILGS (70 aa)) is the EamA domain. At 57-60 (VLQN) the chain is on the periplasmic side. The chain crosses the membrane as a helical span at residues 61–81 (VPVGIAYPMLSLNFVWVTLAA). The Cytoplasmic segment spans residues 82–87 (VKLWHE). A helical membrane pass occupies residues 88–108 (PVSLRHWCGLAFIIGGIVILG). The Periplasmic portion of the chain corresponds to 109–111 (STV).

The protein belongs to the ArnE family. In terms of assembly, heterodimer of ArnE and ArnF.

The protein resides in the cell inner membrane. The protein operates within bacterial outer membrane biogenesis; lipopolysaccharide biosynthesis. In terms of biological role, translocates 4-amino-4-deoxy-L-arabinose-phosphoundecaprenol (alpha-L-Ara4N-phosphoundecaprenol) from the cytoplasmic to the periplasmic side of the inner membrane. The polypeptide is Probable 4-amino-4-deoxy-L-arabinose-phosphoundecaprenol flippase subunit ArnE (Escherichia coli O81 (strain ED1a)).